A 187-amino-acid polypeptide reads, in one-letter code: MSDSNPGAANPALGPDADAAAGEGLELAQFAAGCFWSVELTYQRLPGVARTEVGYSQGHRHEPTYRDVCGGGTGHAEVVRVHYDPKACPYEVLLDVFWAKHNPTTLNRQGNDVGTQYRSGIYYYTAEQEKAARDSLAEKQKEWKERIVTEILPATRFYPAEEYHQRYLEKGGQSAKKSCNDPIRCYG.

It belongs to the MsrA Met sulfoxide reductase family.

The protein localises to the cytoplasm. Its subcellular location is the cytosol. It carries out the reaction L-methionyl-[protein] + [thioredoxin]-disulfide + H2O = L-methionyl-(S)-S-oxide-[protein] + [thioredoxin]-dithiol. The catalysed reaction is [thioredoxin]-disulfide + L-methionine + H2O = L-methionine (S)-S-oxide + [thioredoxin]-dithiol. In terms of biological role, catalyzes the reduction of methionine sulfoxide (MetSO) to methionine in proteins. Plays a protective role against oxidative stress by restoring activity to proteins that have been inactivated by methionine oxidation. MSRA family specifically reduces the MetSO S-enantiomer. This Oryza sativa subsp. japonica (Rice) protein is Peptide methionine sulfoxide reductase A2-1 (MSRA2-1).